The primary structure comprises 141 residues: uncharacterized protein (141 aa).

It is found in the cytoplasm. This is an uncharacterized protein from Homo sapiens (Human).